A 384-amino-acid chain; its full sequence is MATEEMKKLATVMAIGTANPPNCYYQADFPDFYFRVTNSDHLINLKQKFKRLCENSRIEKRYLHVTEEILKENPNIAAYEATSLNVRHKMQVKGVAELGKEAALKAIKEWGQPKSKITHLIVCCLAGVDMPGADYQLTKLLDLDPSVKRFMFYHLGCYAGGTVLRLAKDIAENNKGARVLIVCSEMTTTCFRGPSETHLDSMIGQAILGDGAAAVIVGADPDLTVERPIFELVSTAQTIVPESHGAIEGHLLESGLSFHLYKTVPTLISNNIKTCLSDAFTPLNISDWNSLFWIAHPGGPAILDQVTAKVGLEKEKLKVTRQVLKDYGNMSSATVFFIMDEMRKKSLENGQATTGEGLEWGVLFGFGPGITVETVVLRSVPVIS.

Cys-157 (nucleophile and monoketide coumarate intermediate) is an active-site residue. Cys-157 bears the S-(4-hydroxycinnamyl)cysteine mark.

It belongs to the thiolase-like superfamily. Chalcone/stilbene synthases family. Homodimer.

It carries out the reaction 4-coumaroyl-CoA + malonyl-CoA + H2O + H(+) = 4-hydroxybenzalacetone + 2 CO2 + 2 CoA. It participates in secondary metabolite biosynthesis; flavonoid biosynthesis. Functionally, polyketide synthase producing 4-hydroxybenzalacetone. Can use p-coumaryl-CoA as substrate but does not accept hexanoyl-CoA, isobutyryl-CoA, isovaleryl-CoA, and acetyl-CoA as a substrates. Catalyzes the initial key reaction step in the biosynthesis of phenylbutanoids. The sequence is that of Polyketide synthase BAS (BAS) from Rheum palmatum (Chinese rhubarb).